The primary structure comprises 434 residues: Oxysterol-binding protein homolog 4 (434 aa).

Residues 7–29 form an ALPS motif region; the sequence is SSSWTSFLKSIASFNGDLSSLSA. The tract at residues 16 to 366 is OSBP-related domain (ORD); the sequence is SIASFNGDLS…WQRRWFKDFD (351 aa). Position 24–29 (24–29) interacts with a 1,2-diacyl-sn-glycero-3-phospho-(1D-myo-inositol 4-phosphate); the sequence is LSSLSA. 20-hydroxycholesterol is bound at residue glutamine 96. Residue glutamine 96 coordinates 25-hydroxycholesterol. 7beta-hydroxycholesterol-binding residues include glutamine 96 and arginine 100. Glutamine 96 is a cholesterol binding site. Glutamine 96 serves as a coordination point for ergosterol. A 1,2-diacyl-sn-glycero-3-phospho-(1D-myo-inositol 4-phosphate)-binding positions include 109–112, 143–144, lysine 336, glutamate 340, and arginine 344; these read KPLN and HH. A Phosphothreonine modification is found at threonine 370. Serine 389 is subject to Phosphoserine.

This sequence belongs to the OSBP family.

The protein resides in the cytoplasm. Its subcellular location is the golgi apparatus membrane. Its function is as follows. Lipid transport protein (LTP) involved in non-vesicular transfer of lipids between membranes. Functions in phosphoinositide-coupled directional transport of various lipids by carrying the lipid molecule in a hydrophobic pocket and transferring it between membranes through the cytosol. Involved in maintenance of intracellular sterol distribution and homeostasis. Involved in lipid countertransport between the Golgi complex and membranes of the endoplasmic reticulum. Specifically exchanges sterol with phosphatidylinositol 4-phosphate (PI4P), delivering sterol to the Golgi in exchange for PI4P, which is delivered to the ER-localized PI4P phosphatase SAC1 for degradation. Thus, by maintaining a PI4P gradient at the ER/Golgi interface, SAC1 may drive PS transport. Displays a similar affinity for PI4P and sterols. Binds sterol and PI4P in a mutually exclusive manner. Involved in ergosterol transport from the plasma membrane (PM) to the ER. Mediates sterol transport from the ER to mitochondria. Involved in the negative regulation of Golgi-derived transport vesicle biogenesis. Plays a role in the positive regulation of vesicular transport of ceramide from the ER to the Golgi, negatively regulating COPII-mediated ER export of cargos. This Saccharomyces cerevisiae (strain ATCC 204508 / S288c) (Baker's yeast) protein is Oxysterol-binding protein homolog 4.